An 84-amino-acid chain; its full sequence is Seminal ribonuclease (84 aa).

3 cysteine pairs are disulfide-bonded: Cys-10/Cys-65, Cys-28/Cys-80, and Cys-35/Cys-42. Substrate is bound by residues 11–15 (KPVNT), Lys-36, and Arg-55.

The protein belongs to the pancreatic ribonuclease family. As to quaternary structure, homodimer; disulfide-linked.

It is found in the secreted. It carries out the reaction an [RNA] containing cytidine + H2O = an [RNA]-3'-cytidine-3'-phosphate + a 5'-hydroxy-ribonucleotide-3'-[RNA].. The enzyme catalyses an [RNA] containing uridine + H2O = an [RNA]-3'-uridine-3'-phosphate + a 5'-hydroxy-ribonucleotide-3'-[RNA].. This is Seminal ribonuclease (SRN) from Giraffa camelopardalis (Giraffe).